A 344-amino-acid polypeptide reads, in one-letter code: N-acetyl-gamma-glutamyl-phosphate reductase (344 aa).

Cys-148 is an active-site residue.

This sequence belongs to the NAGSA dehydrogenase family. Type 1 subfamily.

The protein resides in the cytoplasm. It catalyses the reaction N-acetyl-L-glutamate 5-semialdehyde + phosphate + NADP(+) = N-acetyl-L-glutamyl 5-phosphate + NADPH + H(+). The protein operates within amino-acid biosynthesis; L-arginine biosynthesis; N(2)-acetyl-L-ornithine from L-glutamate: step 3/4. Its function is as follows. Catalyzes the NADPH-dependent reduction of N-acetyl-5-glutamyl phosphate to yield N-acetyl-L-glutamate 5-semialdehyde. The chain is N-acetyl-gamma-glutamyl-phosphate reductase from Geobacillus thermodenitrificans (strain NG80-2).